The primary structure comprises 286 residues: Shikimate dehydrogenase (NADP(+)) (286 aa).

Residues 19 to 21 (SVS) and T66 contribute to the shikimate site. K70 acts as the Proton acceptor in catalysis. N91 and D106 together coordinate shikimate. NADP(+) is bound by residues 130–134 (GAGGS) and A225. Y227 is a binding site for shikimate. G248 provides a ligand contact to NADP(+).

The protein belongs to the shikimate dehydrogenase family. In terms of assembly, homodimer.

The catalysed reaction is shikimate + NADP(+) = 3-dehydroshikimate + NADPH + H(+). Its pathway is metabolic intermediate biosynthesis; chorismate biosynthesis; chorismate from D-erythrose 4-phosphate and phosphoenolpyruvate: step 4/7. Its function is as follows. Involved in the biosynthesis of the chorismate, which leads to the biosynthesis of aromatic amino acids. Catalyzes the reversible NADPH linked reduction of 3-dehydroshikimate (DHSA) to yield shikimate (SA). The polypeptide is Shikimate dehydrogenase (NADP(+)) (Dehalococcoides mccartyi (strain ATCC BAA-2100 / JCM 16839 / KCTC 5957 / BAV1)).